Reading from the N-terminus, the 125-residue chain is uncharacterized protein (125 aa).

Residues 21–43 (KFSLIALVSFTALAIIVLYHNIS) form a helical membrane-spanning segment.

The protein localises to the membrane. This is an uncharacterized protein from Archaeoglobus fulgidus (strain ATCC 49558 / DSM 4304 / JCM 9628 / NBRC 100126 / VC-16).